A 617-amino-acid polypeptide reads, in one-letter code: Electron transfer flavoprotein-ubiquinone oxidoreductase, mitochondrial (617 aa).

A mitochondrion-targeting transit peptide spans 1–33; sequence MMVPLAKLASPAYQCFHALKIKKNYLPLCATRW. 75 to 80 contributes to the FAD binding site; sequence GAGPAG. Lys-96 is subject to N6-acetyllysine. Residues 109–130 lie within the membrane without spanning it; it reads IGAHTLSGACLDPRAFEELFPD. Residues Lys-132 and Lys-223 each carry the N6-acetyllysine modification. Positions 305 and 306 each coordinate a ubiquinone. Lys-357 is modified (N6-acetyllysine). The stretch at 428–447 is an intramembrane region; that stretch reads IGLHVTEYEDNLKNSWVWKE. The residue at position 551 (Ser-551) is a Phosphoserine. Residues Cys-561, Cys-586, Cys-589, and Cys-592 each contribute to the [4Fe-4S] cluster site. One can recognise a 4Fe-4S ferredoxin-type domain in the interval 577-606; sequence FRLQINAQNCVHCKTCDIKDPSQNINWVVP.

Monomer. The cofactor is [4Fe-4S] cluster. Requires FAD as cofactor.

Its subcellular location is the mitochondrion inner membrane. The enzyme catalyses a ubiquinone + reduced [electron-transfer flavoprotein] = a ubiquinol + oxidized [electron-transfer flavoprotein] + H(+). Its function is as follows. Accepts electrons from ETF and reduces ubiquinone. The chain is Electron transfer flavoprotein-ubiquinone oxidoreductase, mitochondrial (ETFDH) from Sus scrofa (Pig).